The sequence spans 476 residues: Membrane-bound lytic murein transglycosylase F (476 aa).

The signal sequence occupies residues 1–15; the sequence is MRSFLLILFCVSLLT. Positions 16 to 258 are non-LT domain; sequence GCQGERVDAA…HLNEKYFAHV (243 aa). Residues 259–476 form an LT domain region; the sequence is KRFDYVDTRA…QSEISAAQPN (218 aa). Glu-303 is an active-site residue. The segment at 456 to 476 is disordered; it reads EAQQQTAEKQSQSEISAAQPN.

This sequence in the N-terminal section; belongs to the bacterial solute-binding protein 3 family. In the C-terminal section; belongs to the transglycosylase Slt family.

The protein localises to the cell outer membrane. The catalysed reaction is Exolytic cleavage of the (1-&gt;4)-beta-glycosidic linkage between N-acetylmuramic acid (MurNAc) and N-acetylglucosamine (GlcNAc) residues in peptidoglycan, from either the reducing or the non-reducing ends of the peptidoglycan chains, with concomitant formation of a 1,6-anhydrobond in the MurNAc residue.. Murein-degrading enzyme that degrades murein glycan strands and insoluble, high-molecular weight murein sacculi, with the concomitant formation of a 1,6-anhydromuramoyl product. Lytic transglycosylases (LTs) play an integral role in the metabolism of the peptidoglycan (PG) sacculus. Their lytic action creates space within the PG sacculus to allow for its expansion as well as for the insertion of various structures such as secretion systems and flagella. The polypeptide is Membrane-bound lytic murein transglycosylase F (Shewanella loihica (strain ATCC BAA-1088 / PV-4)).